Here is a 162-residue protein sequence, read N- to C-terminus: N5-carboxyaminoimidazole ribonucleotide mutase (162 aa).

Residues serine 11, aspartate 14, and arginine 41 each contribute to the substrate site.

The protein belongs to the AIR carboxylase family. Class I subfamily.

It carries out the reaction 5-carboxyamino-1-(5-phospho-D-ribosyl)imidazole + H(+) = 5-amino-1-(5-phospho-D-ribosyl)imidazole-4-carboxylate. The protein operates within purine metabolism; IMP biosynthesis via de novo pathway; 5-amino-1-(5-phospho-D-ribosyl)imidazole-4-carboxylate from 5-amino-1-(5-phospho-D-ribosyl)imidazole (N5-CAIR route): step 2/2. Its function is as follows. Catalyzes the conversion of N5-carboxyaminoimidazole ribonucleotide (N5-CAIR) to 4-carboxy-5-aminoimidazole ribonucleotide (CAIR). In Bacillus subtilis (strain 168), this protein is N5-carboxyaminoimidazole ribonucleotide mutase.